The primary structure comprises 1127 residues: Disease resistance protein RPS6 (1127 aa).

M1 carries the N-acetylmethionine modification. The TIR domain maps to W12 to M176. E87 is an active-site residue. LRR repeat units follow at residues M197–K221, I540–K563, P587–P609, E610–L632, A633–T656, L658–L679, N680–S704, S766–L790, Y791–L813, D814–S834, and T835–L857.

Interacts with EDS1. In terms of tissue distribution, ubiquitous.

It carries out the reaction NAD(+) + H2O = ADP-D-ribose + nicotinamide + H(+). Its function is as follows. Disease resistance (R) protein that specifically recognizes the hopA1 type III effector avirulence protein from Pseudomonas syringae. Resistance proteins guard the plant against pathogens that contain an appropriate avirulence protein via an indirect interaction with this avirulence protein. That triggers a defense system including the hypersensitive response, which restricts the pathogen growth. The sequence is that of Disease resistance protein RPS6 from Arabidopsis thaliana (Mouse-ear cress).